We begin with the raw amino-acid sequence, 137 residues long: Small ribosomal subunit protein uS13 (137 aa).

The interval valine 114 to lysine 137 is disordered. Residues alanine 119–methionine 130 are compositionally biased toward basic residues.

It belongs to the universal ribosomal protein uS13 family. In terms of assembly, part of the 30S ribosomal subunit. Forms a loose heterodimer with protein S19. Forms two bridges to the 50S subunit in the 70S ribosome.

Its function is as follows. Located at the top of the head of the 30S subunit, it contacts several helices of the 16S rRNA. In the 70S ribosome it contacts the 23S rRNA (bridge B1a) and protein L5 of the 50S subunit (bridge B1b), connecting the 2 subunits; these bridges are implicated in subunit movement. Contacts the tRNAs in the A and P-sites. In Mesomycoplasma hyopneumoniae (strain 232) (Mycoplasma hyopneumoniae), this protein is Small ribosomal subunit protein uS13.